The chain runs to 512 residues: MSQDQPIVLDPTYASFDAAARPADLGATHFIGIGGAGMSVLAEMLHAEGVAVDGSDRAHSAKTDRLETLGITVEFGQRAENVAQAETVVYSSAIKPDNPEIVAAHAAGKRIVHRSDILALLMNGKRAVTVAGAHGKTTTSSMLSHILVNAGADPSYAIGGFIQGPDGTTLDGGHAGKGDILVAEADESDGSFAKYHPTIAIITNCEADHLDHYGDEAHYRAAFVAHAGRATGHVIISIDDPDGLAVLEALPADVKSHTVAYGTTARESLPDLGGAAYVWIASESETAGSGVEQLTLHLPAAVTAGEPVSQSVALKVPGVHNARNAAAAISAAVLLGVSPADAAKAAGTFLGAARRFQVRGTVKQVTVVDDYAHHPTEIAALLDAARRRYPDSTIRVIFQPHLFSRTKFFAHQFAKSLAKADDVIITGIFPAREKQADFPDISPSTIVDAAAGLKDASAGTWIQPVEDMCLAAKMMAMRAHHGDVIFTVGAGDITDMDQVLLTALEAHRESCE.

Residue 132–138 coordinates ATP; sequence GAHGKTT.

It belongs to the MurCDEF family.

It localises to the cytoplasm. It carries out the reaction UDP-N-acetyl-alpha-D-muramate + L-alanine + ATP = UDP-N-acetyl-alpha-D-muramoyl-L-alanine + ADP + phosphate + H(+). The protein operates within cell wall biogenesis; peptidoglycan biosynthesis. In terms of biological role, cell wall formation. The sequence is that of UDP-N-acetylmuramate--L-alanine ligase from Bifidobacterium longum (strain NCC 2705).